The sequence spans 434 residues: Ribosomal protein uS12 methylthiotransferase RimO (434 aa).

The MTTase N-terminal domain maps to 2–112; sequence AKIGFVSLGC…VLEAVQVVLP (111 aa). The [4Fe-4S] cluster site is built by Cys11, Cys47, Cys76, Cys142, Cys146, and Cys149. Residues 128–365 enclose the Radical SAM core domain; it reads LTPRHYAYVK…LELQARVSLR (238 aa). Residues 368-434 enclose the TRAM domain; the sequence is QRFVGKTLEV…DTYDLHGVQA (67 aa).

It belongs to the methylthiotransferase family. RimO subfamily. The cofactor is [4Fe-4S] cluster.

It is found in the cytoplasm. The catalysed reaction is L-aspartate(89)-[ribosomal protein uS12]-hydrogen + (sulfur carrier)-SH + AH2 + 2 S-adenosyl-L-methionine = 3-methylsulfanyl-L-aspartate(89)-[ribosomal protein uS12]-hydrogen + (sulfur carrier)-H + 5'-deoxyadenosine + L-methionine + A + S-adenosyl-L-homocysteine + 2 H(+). In terms of biological role, catalyzes the methylthiolation of an aspartic acid residue of ribosomal protein uS12. This Thermus thermophilus (strain ATCC 27634 / DSM 579 / HB8) protein is Ribosomal protein uS12 methylthiotransferase RimO.